A 191-amino-acid chain; its full sequence is Leucyl/phenylalanyl-tRNA--protein transferase (191 aa).

Belongs to the L/F-transferase family.

The protein resides in the cytoplasm. It carries out the reaction N-terminal L-lysyl-[protein] + L-leucyl-tRNA(Leu) = N-terminal L-leucyl-L-lysyl-[protein] + tRNA(Leu) + H(+). It catalyses the reaction N-terminal L-arginyl-[protein] + L-leucyl-tRNA(Leu) = N-terminal L-leucyl-L-arginyl-[protein] + tRNA(Leu) + H(+). The catalysed reaction is L-phenylalanyl-tRNA(Phe) + an N-terminal L-alpha-aminoacyl-[protein] = an N-terminal L-phenylalanyl-L-alpha-aminoacyl-[protein] + tRNA(Phe). In terms of biological role, functions in the N-end rule pathway of protein degradation where it conjugates Leu, Phe and, less efficiently, Met from aminoacyl-tRNAs to the N-termini of proteins containing an N-terminal arginine or lysine. This Rubrobacter xylanophilus (strain DSM 9941 / JCM 11954 / NBRC 16129 / PRD-1) protein is Leucyl/phenylalanyl-tRNA--protein transferase.